Reading from the N-terminus, the 346-residue chain is G-protein coupled receptor 42 (346 aa).

Residues Met1 to Ser19 are Extracellular-facing. The helical transmembrane segment at Val20–Val40 threads the bilayer. Over Gly41–Pro47 the chain is Cytoplasmic. A helical transmembrane segment spans residues Val48–Leu68. The Extracellular portion of the chain corresponds to Pro69–Leu90. Residues Ser91–Ile111 form a helical membrane-spanning segment. Residues Glu112–Ala132 lie on the Cytoplasmic side of the membrane. A helical transmembrane segment spans residues Gly133–Ile153. At Glu154–Leu178 the chain is on the extracellular side. Asn166 carries an N-linked (GlcNAc...) asparagine glycan. A helical membrane pass occupies residues Ala179–Ile199. Topologically, residues Thr200–Arg222 are cytoplasmic. Residues Val223–Val243 form a helical membrane-spanning segment. Residues Ser244–Arg258 lie on the Extracellular side of the membrane. The chain crosses the membrane as a helical span at residues Ile259–Ser279. Residues Ser280–Asn346 are Cytoplasmic-facing. Basic and acidic residues predominate over residues Met307–Glu330. The tract at residues Met307–Asn346 is disordered.

Belongs to the G-protein coupled receptor 1 family.

The protein localises to the cell membrane. Functionally, g protein-coupled receptor that is activated by short chain fatty acids (SCFAs), such as propionate. Hence may play a role in the regulation of whole-body energy homeostasis and/or in intestinal immunity. This chain is G-protein coupled receptor 42 (GPR42), found in Homo sapiens (Human).